A 431-amino-acid polypeptide reads, in one-letter code: Acetylornithine aminotransferase (431 aa).

Pyridoxal 5'-phosphate-binding positions include 118–119 (GA) and F157. Residue R160 participates in N(2)-acetyl-L-ornithine binding. 251–254 (DEVQ) is a pyridoxal 5'-phosphate binding site. An N6-(pyridoxal phosphate)lysine modification is found at K284. S313 lines the N(2)-acetyl-L-ornithine pocket. T314 contacts pyridoxal 5'-phosphate.

It belongs to the class-III pyridoxal-phosphate-dependent aminotransferase family. ArgD subfamily. As to quaternary structure, homodimer. It depends on pyridoxal 5'-phosphate as a cofactor.

Its subcellular location is the cytoplasm. It catalyses the reaction N(2)-acetyl-L-ornithine + 2-oxoglutarate = N-acetyl-L-glutamate 5-semialdehyde + L-glutamate. It functions in the pathway amino-acid biosynthesis; L-arginine biosynthesis; N(2)-acetyl-L-ornithine from L-glutamate: step 4/4. The sequence is that of Acetylornithine aminotransferase from Bifidobacterium longum (strain NCC 2705).